The sequence spans 308 residues: Transmembrane and ubiquitin-like domain-containing protein 1 (308 aa).

Residues 11–31 (VTVLFALVLFFMVLMLAWVST) traverse the membrane as a helical segment. The tract at residues 39–162 (THWIRPEPAQ…GLGDGTTAQS (124 aa)) is disordered. A compositionally biased stretch (polar residues) spans 63–93 (PSQTLTNADPNSETVDSSDSTQSSREFQNAG). Positions 103 to 115 (SSSGSTVSTGGSV) are enriched in low complexity. The segment covering 132 to 149 (PNFTVSSRDPQAGASSSL) has biased composition (polar residues). The Ubiquitin-like domain occupies 169–242 (IHLRLKFLND…LHCHISQHAS (74 aa)). 2 helical membrane-spanning segments follow: residues 253–273 (VPLN…MLLW) and 283–303 (FTGT…AIAF).

The protein localises to the membrane. It is found in the cytoplasm. The protein resides in the nucleus. Its function is as follows. May contribute to the regulation of translation during cell-cycle progression. May contribute to the regulation of cell proliferation. The membrane form is involved in sterol-regulated ubiquitination and degradation of HMG-CoA reductase HMGCR. May be involved in centrosome assembly. In Xenopus laevis (African clawed frog), this protein is Transmembrane and ubiquitin-like domain-containing protein 1 (tmub1).